Consider the following 117-residue polypeptide: Ribosome-binding factor A (117 aa).

Belongs to the RbfA family. As to quaternary structure, monomer. Binds 30S ribosomal subunits, but not 50S ribosomal subunits or 70S ribosomes.

Its subcellular location is the cytoplasm. Its function is as follows. One of several proteins that assist in the late maturation steps of the functional core of the 30S ribosomal subunit. Associates with free 30S ribosomal subunits (but not with 30S subunits that are part of 70S ribosomes or polysomes). Required for efficient processing of 16S rRNA. May interact with the 5'-terminal helix region of 16S rRNA. In Leuconostoc citreum (strain KM20), this protein is Ribosome-binding factor A.